We begin with the raw amino-acid sequence, 195 residues long: Molybdenum cofactor guanylyltransferase (195 aa).

GTP is bound by residues 10-12 (LAG), Lys23, Asn51, Asp69, and Asp99. A Mg(2+)-binding site is contributed by Asp99.

Belongs to the MobA family. In terms of assembly, monomer. Requires Mg(2+) as cofactor.

Its subcellular location is the cytoplasm. It catalyses the reaction Mo-molybdopterin + GTP + H(+) = Mo-molybdopterin guanine dinucleotide + diphosphate. In terms of biological role, transfers a GMP moiety from GTP to Mo-molybdopterin (Mo-MPT) cofactor (Moco or molybdenum cofactor) to form Mo-molybdopterin guanine dinucleotide (Mo-MGD) cofactor. The chain is Molybdenum cofactor guanylyltransferase from Histophilus somni (strain 129Pt) (Haemophilus somnus).